We begin with the raw amino-acid sequence, 52 residues long: Large ribosomal subunit protein bL32c (52 aa).

It belongs to the bacterial ribosomal protein bL32 family.

It is found in the plastid. Its subcellular location is the chloroplast. This chain is Large ribosomal subunit protein bL32c, found in Citrus sinensis (Sweet orange).